The sequence spans 580 residues: Phosphatase and actin regulator 1 (580 aa).

Phosphoserine is present on residues Ser-67 and Ser-78. Thr-104 carries the phosphothreonine modification. The Nuclear localization signal signature appears at 108 to 129 (RRRSKFANLGRIFKPWKWRKKK). The stretch at 138-163 (AALERKISMRQSREELIKRGVLKEIY) is one RPEL 1 repeat. Disordered regions lie at residues 330–350 (SEQRVPCSTSYHSSGLHSSDG) and 374–408 (DNKENVPHEPDYEDSPCLYGREEEEEEEDEDDDAS). Residues 337–348 (STSYHSSGLHSS) show a composition bias toward low complexity. A compositionally biased stretch (basic and acidic residues) spans 374–383 (DNKENVPHEP). The segment covering 395-407 (EEEEEEEDEDDDA) has biased composition (acidic residues). RPEL repeat units lie at residues 422 to 447 (DSLAIKLSNRPSKRELEEKNILPRQT), 460 to 485 (TKLTRRLSQRPTAEELEQRNILKPRN), and 498 to 523 (RRLTRKLSQRPTVEELRERKILIRFS). The segment at 463–494 (TRRLSQRPTAEELEQRNILKPRNEQEEQEEKR) is disordered. Position 467 is a phosphoserine (Ser-467). The span at 471–494 (TAEELEQRNILKPRNEQEEQEEKR) shows a compositional bias: basic and acidic residues. A Phosphoserine modification is found at Ser-505.

This sequence belongs to the phosphatase and actin regulator family. As to quaternary structure, interacts (via RPEL repeats) with ACTA1 and PPP1CA; ACTA1 and PPP1CA compete for the same binding site.

The protein resides in the cytoplasm. It is found in the synapse. Its subcellular location is the nucleus. In terms of biological role, binds actin monomers (G actin) and plays a role in multiple processes including the regulation of actin cytoskeleton dynamics, actin stress fibers formation, cell motility and survival, formation of tubules by endothelial cells, and regulation of PPP1CA activity. Involved in the regulation of cortical neuron migration and dendrite arborization. The polypeptide is Phosphatase and actin regulator 1 (Phactr1) (Mus musculus (Mouse)).